The sequence spans 96 residues: Large ribosomal subunit protein bL28 (96 aa).

A compositionally biased stretch (polar residues) spans 1–22 (MSRSCELTGKGVQSGNNVSHAN). The segment at 1-24 (MSRSCELTGKGVQSGNNVSHANNK) is disordered.

The protein belongs to the bacterial ribosomal protein bL28 family.

The polypeptide is Large ribosomal subunit protein bL28 (Rhizobium meliloti (strain 1021) (Ensifer meliloti)).